Reading from the N-terminus, the 346-residue chain is Heat-inducible transcription repressor HrcA (346 aa).

This sequence belongs to the HrcA family.

Negative regulator of class I heat shock genes (grpE-dnaK-dnaJ and groELS operons). Prevents heat-shock induction of these operons. The sequence is that of Heat-inducible transcription repressor HrcA from Kineococcus radiotolerans (strain ATCC BAA-149 / DSM 14245 / SRS30216).